Here is a 170-residue protein sequence, read N- to C-terminus: Adenine phosphoribosyltransferase (170 aa).

It belongs to the purine/pyrimidine phosphoribosyltransferase family. Homodimer.

The protein resides in the cytoplasm. The enzyme catalyses AMP + diphosphate = 5-phospho-alpha-D-ribose 1-diphosphate + adenine. It functions in the pathway purine metabolism; AMP biosynthesis via salvage pathway; AMP from adenine: step 1/1. Functionally, catalyzes a salvage reaction resulting in the formation of AMP, that is energically less costly than de novo synthesis. This Prochlorococcus marinus (strain AS9601) protein is Adenine phosphoribosyltransferase.